The primary structure comprises 509 residues: Scavenger receptor class B member 1 (509 aa).

At 1 to 11 the chain is on the cytoplasmic side; the sequence is MGNLSRARRVT. The chain crosses the membrane as a helical span at residues 12–32; sequence AALGFIGLLFAVLGIIMIVMV. The Extracellular segment spans residues 33–440; that stretch reads PSIIKQQVLK…YIQLVLMPKV (408 aa). Residues Asn-102, Asn-108, Asn-173, Asn-212, Asn-227, Asn-255, Asn-310, Asn-330, and Asn-383 are each glycosylated (N-linked (GlcNAc...) asparagine). An intrachain disulfide couples Cys-251 to Cys-384. A helical transmembrane segment spans residues 441–461; sequence LHYAQYVLLALGCVLLLIPII. The Cytoplasmic segment spans residues 462–509; sequence YQIRSQEKCYLFWISFKKGSKDKEAVQAYSEFLMTSAPKGTVLQEARL.

This sequence belongs to the CD36 family. In terms of processing, N-glycosylated. Post-translationally, the six cysteines of the extracellular domain are all involved in intramolecular disulfide bonds.

It is found in the cell membrane. Its subcellular location is the membrane. The protein resides in the caveola. In terms of biological role, receptor for different ligands such as phospholipids, cholesterol ester, lipoproteins, phosphatidylserine and apoptotic cells. Receptor for HDL, mediating selective uptake of cholesteryl ether and HDL-dependent cholesterol efflux. Also facilitates the flux of free and esterified cholesterol between the cell surface and apoB-containing lipoproteins and modified lipoproteins, although less efficiently than HDL. May be involved in the phagocytosis of apoptotic cells, via its phosphatidylserine binding activity. The chain is Scavenger receptor class B member 1 (SCARB1) from Bos taurus (Bovine).